The chain runs to 323 residues: Acetyl-coenzyme A carboxylase carboxyl transferase subunit alpha (323 aa).

In terms of domain architecture, CoA carboxyltransferase C-terminal spans 40–293 (LSEKSLQLTK…RKALSDSLKT (254 aa)).

The protein belongs to the AccA family. Acetyl-CoA carboxylase is a heterohexamer composed of biotin carboxyl carrier protein (AccB), biotin carboxylase (AccC) and two subunits each of ACCase subunit alpha (AccA) and ACCase subunit beta (AccD).

Its subcellular location is the cytoplasm. The enzyme catalyses N(6)-carboxybiotinyl-L-lysyl-[protein] + acetyl-CoA = N(6)-biotinyl-L-lysyl-[protein] + malonyl-CoA. It functions in the pathway lipid metabolism; malonyl-CoA biosynthesis; malonyl-CoA from acetyl-CoA: step 1/1. Functionally, component of the acetyl coenzyme A carboxylase (ACC) complex. First, biotin carboxylase catalyzes the carboxylation of biotin on its carrier protein (BCCP) and then the CO(2) group is transferred by the carboxyltransferase to acetyl-CoA to form malonyl-CoA. The polypeptide is Acetyl-coenzyme A carboxylase carboxyl transferase subunit alpha (Polynucleobacter asymbioticus (strain DSM 18221 / CIP 109841 / QLW-P1DMWA-1) (Polynucleobacter necessarius subsp. asymbioticus)).